Here is a 487-residue protein sequence, read N- to C-terminus: Acetylcholine receptor subunit beta-type acr-3 (487 aa).

Positions 1-20 (MQKIWLFSIITIFLITELQC) are cleaved as a signal peptide. At 21–231 (YPNSAEERLL…KIRRKALFYT (211 aa)) the chain is on the extracellular side. Residue Asn-46 is glycosylated (N-linked (GlcNAc...) asparagine). A disulfide bridge connects residues Cys-151 and Cys-165. 3 consecutive transmembrane segments (helical) span residues 232–252 (VILI…FYLP), 259–279 (ITLA…VSKI), and 294–314 (LLMT…IINV). Topologically, residues 315–439 (YFRGPATHIM…WKFVSVVIDR (125 aa)) are cytoplasmic. The disordered stretch occupies residues 380 to 400 (ISEQPKQTSRKDGSSSEEKLS). Residues 440–460 (LLLYLFFAVTTGGTVGILLSA) traverse the membrane as a helical segment.

This sequence belongs to the ligand-gated ion channel (TC 1.A.9) family. Acetylcholine receptor (TC 1.A.9.1) subfamily. In terms of assembly, component of nicotinic acetylcholine receptor. In cholinergic motoneurons, composed of 2 non-alpha subunits acr-2 and acr-3, and 3 alpha subunits unc-38, unc-63 and acr-12.

The protein resides in the postsynaptic cell membrane. It localises to the cell membrane. Its function is as follows. Non-alpha subunit of nicotinic acetylcholine receptor (nAChR). Probably acts in cholinergic motoneurons to regulate presynaptic neurotransmitter release, thereby ensuring normal level of excitation of cholinergic motoneurons during locomotion. This is Acetylcholine receptor subunit beta-type acr-3 (acr-3) from Caenorhabditis elegans.